The chain runs to 692 residues: ATP-dependent RNA helicase MSS116, mitochondrial (692 aa).

Residues 1–37 constitute a mitochondrion transit peptide; it reads MMIARFGKQVLRKNVLVSNRIHFPVISRGFHNSFINK. The interval 82-113 is disordered; the sequence is SQVTEQTELTKSEEEEKKKKNINTNTNKNDRK. Positions 89–99 are enriched in basic and acidic residues; the sequence is ELTKSEEEEKK. The Q motif motif lies at 130 to 158; that stretch reads DFKNTGLIDDVILRALDRAHFKDLTPIQQ. One can recognise a Helicase ATP-binding domain in the interval 162–349; the sequence is VPLLETERGM…KQHINKKYDY (188 aa). 175 to 182 contributes to the ATP binding site; sequence AKTGTGKT. A DEAD box motif is present at residues 290 to 293; that stretch reads DEAD. Positions 384–534 constitute a Helicase C-terminal domain; the sequence is YVNQLVKDSP…QVHESSEIDN (151 aa). Positions 643–692 are disordered; that stretch reads NRYSGGGGNRSEKRFSFAGRGGNSGGHSGRGRGGRSGYSGGRSSQYSDWE. Positions 661–670 are enriched in gly residues; that stretch reads GRGGNSGGHS.

Belongs to the DEAD box helicase family. DDX18/HAS1 subfamily.

The protein localises to the mitochondrion matrix. It catalyses the reaction ATP + H2O = ADP + phosphate + H(+). Functionally, ATP-dependent RNA helicase required for mitochondrial splicing of group I and II introns. Also required for efficient mitochondrial translation. The protein is ATP-dependent RNA helicase MSS116, mitochondrial (MSS116) of Lodderomyces elongisporus (strain ATCC 11503 / CBS 2605 / JCM 1781 / NBRC 1676 / NRRL YB-4239) (Yeast).